The sequence spans 366 residues: MSAPLKRTPLAEEHLAAGACMVDFGGWDMPLAYGSQLEEHHAVRQDAGMFDVSHMLNVDVGGADATAFLRRLVANDVARLATPGKALYSCMLNPQGGIIDDLIIYYFAPDQWRVVVNAGTADKDIAWMQRVAAADGFDVVIAPRRDLAMVAVQGPNARAKVWAARPAWQAASEPLAPFSAAAVEAGTLVARTGYTGEDGFEIVLPADAVVQLWRDLLAQGVRPCGLGARDTLRLEAGMNLYGQDMDELVHPDQAGLSWTVALKDEARRFVGRDAIEQFAVPRAFVGLKLQERGVMRAHMPVRCAQGMGELTSGTMSPTLGVSVGFARMPVGVQPGDAVEVEIRGKWVPALVCKLPFVRHGKAVEHS.

The protein belongs to the GcvT family. In terms of assembly, the glycine cleavage system is composed of four proteins: P, T, L and H.

It catalyses the reaction N(6)-[(R)-S(8)-aminomethyldihydrolipoyl]-L-lysyl-[protein] + (6S)-5,6,7,8-tetrahydrofolate = N(6)-[(R)-dihydrolipoyl]-L-lysyl-[protein] + (6R)-5,10-methylene-5,6,7,8-tetrahydrofolate + NH4(+). The glycine cleavage system catalyzes the degradation of glycine. The protein is Aminomethyltransferase of Bordetella pertussis (strain Tohama I / ATCC BAA-589 / NCTC 13251).